Consider the following 339-residue polypeptide: MENELMYMNWQEMIQPDKIQVEAATPFYGKFICEPLGRGFGITIGNALRRIIISSLHGAAITSVKIDNVMHEYSTVEGVLEDVSEIILNLKEVRLKTSTAAAKTIRIDAAGPGVVTAGDIASPDGRVEILNPESHIATLSEGATLKMEMTVKVGRGYALAEANKDEETPVNTIPIDAMFSPIRRVNYVVGNSRVKQKTDFDKLTLEVWTDGSVLPEDAVAFAAKIMKEQMNVFINFDESAEPEHAGRKDDSGGKVFNENLYRSVNELELSVRSSNCLKNAEIDKLYQLVQKTESEMLKTKNFGRKSLNEIKELLAEMGLSLGMDLEGFVPPAEDNKEGE.

The tract at residues 1–237 (MENELMYMNW…EQMNVFINFD (237 aa)) is alpha N-terminal domain (alpha-NTD). The segment at 256–339 (FNENLYRSVN…PPAEDNKEGE (84 aa)) is alpha C-terminal domain (alpha-CTD).

Belongs to the RNA polymerase alpha chain family. In terms of assembly, homodimer. The RNAP catalytic core consists of 2 alpha, 1 beta, 1 beta' and 1 omega subunit. When a sigma factor is associated with the core the holoenzyme is formed, which can initiate transcription.

The catalysed reaction is RNA(n) + a ribonucleoside 5'-triphosphate = RNA(n+1) + diphosphate. Functionally, DNA-dependent RNA polymerase catalyzes the transcription of DNA into RNA using the four ribonucleoside triphosphates as substrates. In Desulfosudis oleivorans (strain DSM 6200 / JCM 39069 / Hxd3) (Desulfococcus oleovorans), this protein is DNA-directed RNA polymerase subunit alpha.